Here is an 833-residue protein sequence, read N- to C-terminus: MSFYNHKEIEPKWQEFWAKNHTFKTGTDAEKPNFYALDMFPYPSGAGLHVGHPEGYTATDILSRYKRAQGYNVLHPMGWDAFGLPAEQYAMDTGNDPADFTAENIANFKRQINALGFSYDWDREVNTTDPNYYKWTQWIFTKLYEKGLAYEAEVPVNWVEELGTAIANEEVLPDGTSERGGYPVVRKPMRQWMLKITAYAERLLNDLEEVDWPESIKDMQRNWIGKSTGANVTFKIKDTDKDFTVFTTRPDTLFGATYAVLAPEHDLVDSITSAEQAEAVAEYKRQASLKSDLARTDLATDKTGVWTGAYAINPVNGKEIPIWIADYVLASYGTGAIMAVPAHDERDWEFAKQFGLDIIPVLEGGNVEEAPYTEDGAHINSDFLDGLNKEEAIAKMVAWLEENGVGQEKISYRLRDWLFSRQRYWGEPIPIIHWEDGTSTAVPENELPLVLPKTSDIKPSGTGESPLANLTDWLEVVREDGVKGRRETNTMPQWAGSSWYYLRYIDPHNDEKLADEDLLKAWLPVDIYIGGAEHAVLHLLYARFWHKFLYDLGVVPTKEPFQKLFNQGMILGTSYRDSRGALVATDKVEKRDGSFFHMETGEELEQAPAKMSKSLKNVVNPDDVVEQFGADTLRVYEMFMGPLDASIAWSEEGLEGSRKFLDRVYRLLTTKELVAENSGALDKVYNETVKTVTEHIEDLKFNTAIAQLMIFVNAANKEDKLYVDYAKGFVQLIAPFAPHLAEELWQGLANTGQSISYVAWPTYDESKLVESEVEIVVQIKGKVKARLTVAKDLAPAELEKVALADEKVQAEIAGQTVVKVISVPNKLVNIVVK.

A 'HIGH' region motif is present at residues 41 to 52 (PYPSGAGLHVGH). Residues 610-614 (KMSKS) carry the 'KMSKS' region motif. Lysine 613 contributes to the ATP binding site.

Belongs to the class-I aminoacyl-tRNA synthetase family.

It localises to the cytoplasm. It catalyses the reaction tRNA(Leu) + L-leucine + ATP = L-leucyl-tRNA(Leu) + AMP + diphosphate. This chain is Leucine--tRNA ligase, found in Streptococcus suis (strain 05ZYH33).